The chain runs to 126 residues: Aspartate 1-decarboxylase (126 aa).

Ser25 acts as the Schiff-base intermediate with substrate; via pyruvic acid in catalysis. The residue at position 25 (Ser25) is a Pyruvic acid (Ser). Substrate is bound at residue Thr57. Catalysis depends on Tyr58, which acts as the Proton donor. 73–75 (GAA) is a substrate binding site.

The protein belongs to the PanD family. As to quaternary structure, heterooctamer of four alpha and four beta subunits. The cofactor is pyruvate. Is synthesized initially as an inactive proenzyme, which is activated by self-cleavage at a specific serine bond to produce a beta-subunit with a hydroxyl group at its C-terminus and an alpha-subunit with a pyruvoyl group at its N-terminus.

The protein resides in the cytoplasm. It carries out the reaction L-aspartate + H(+) = beta-alanine + CO2. It functions in the pathway cofactor biosynthesis; (R)-pantothenate biosynthesis; beta-alanine from L-aspartate: step 1/1. In terms of biological role, catalyzes the pyruvoyl-dependent decarboxylation of aspartate to produce beta-alanine. In Psychrobacter arcticus (strain DSM 17307 / VKM B-2377 / 273-4), this protein is Aspartate 1-decarboxylase.